Reading from the N-terminus, the 1022-residue chain is Integrator complex subunit 4 (1022 aa).

1D-myo-inositol hexakisphosphate contacts are provided by Thr-148 and Lys-184. A disordered region spans residues 818–840 (KDEEEKPPVVETDMPMKESVSRD).

This sequence belongs to the Integrator subunit 4 family. Belongs to the multiprotein complex Integrator, at least composed of IntS1, IntS2, IntS3, IntS4, omd/IntS5, IntS6, defl/IntS7, IntS8, IntS9, IntS10, IntS11, IntS12, asun/IntS13, IntS14 and IntS15. The core complex associates with protein phosphatase 2A subunits mts/PP2A and Pp2A-29B, to form the Integrator-PP2A (INTAC) complex. IntS4 is part of the RNA endonuclease subcomplex, composed of IntS4, IntS9, IntS11 and inositol hexakisphosphate (InsP6).

It is found in the nucleus. Its function is as follows. Component of the integrator complex, a multiprotein complex that terminates RNA polymerase II (Pol II) transcription in the promoter-proximal region of genes. The integrator complex provides a quality checkpoint during transcription elongation by driving premature transcription termination of transcripts that are unfavorably configured for transcriptional elongation: the complex terminates transcription by (1) catalyzing dephosphorylation of the C-terminal domain (CTD) of Pol II subunit Polr2A/Rbp1 and Spt5, and (2) degrading the exiting nascent RNA transcript via endonuclease activity. The integrator complex is also involved in the 3'-end processing of the U7 snRNA, and also the spliceosomal snRNAs U1, U2, U4 and U5. This Drosophila melanogaster (Fruit fly) protein is Integrator complex subunit 4.